The primary structure comprises 454 residues: Cytochrome b-c1 complex subunit 2, mitochondrial (454 aa).

The N-terminal 35 residues, 1-35 (MISRSALSRGSQLALRRPAAAKTAQRGFAAAAASP), are a transit peptide targeting the mitochondrion.

Belongs to the peptidase M16 family. UQCRC2/QCR2 subfamily. Component of the ubiquinol-cytochrome c oxidoreductase (cytochrome b-c1 complex, complex III, CIII), a multisubunit enzyme composed of 10 subunits. The complex is composed of 3 respiratory subunits cytochrome b (cob), cytochrome c1 (cyt-1) and Rieske protein (fes-1), 2 core protein subunits pep and ucr-1, and 5 low-molecular weight protein subunits qcr6, qcr7, qcr8, qcr9 and probably NCU16844/qcr10. The complex exists as an obligatory dimer and forms supercomplexes (SCs) in the inner mitochondrial membrane with NADH-ubiquinone oxidoreductase (complex I, CI) and cytochrome c oxidase (complex IV, CIV), resulting in different assemblies (supercomplexes SCI(1)III(2), SCIII(2)IV(1) and SCIII(2)IV(2) as well as higher order I(x)III(y)IV(z) megacomplexes).

It localises to the mitochondrion inner membrane. In terms of biological role, component of the ubiquinol-cytochrome c oxidoreductase, a multisubunit transmembrane complex that is part of the mitochondrial electron transport chain which drives oxidative phosphorylation. The respiratory chain contains 3 multisubunit complexes succinate dehydrogenase (complex II, CII), ubiquinol-cytochrome c oxidoreductase (cytochrome b-c1 complex, complex III, CIII) and cytochrome c oxidase (complex IV, CIV), that cooperate to transfer electrons derived from NADH and succinate to molecular oxygen, creating an electrochemical gradient over the inner membrane that drives transmembrane transport and the ATP synthase. The cytochrome b-c1 complex catalyzes electron transfer from ubiquinol to cytochrome c, linking this redox reaction to translocation of protons across the mitochondrial inner membrane, with protons being carried across the membrane as hydrogens on the quinol. In the process called Q cycle, 2 protons are consumed from the matrix, 4 protons are released into the intermembrane space and 2 electrons are passed to cytochrome c. The protein is Cytochrome b-c1 complex subunit 2, mitochondrial (ucr-1) of Neurospora crassa (strain ATCC 24698 / 74-OR23-1A / CBS 708.71 / DSM 1257 / FGSC 987).